A 365-amino-acid chain; its full sequence is tRNA/tmRNA (uracil-C(5))-methyltransferase (365 aa).

Gln-189, Tyr-217, Asn-222, Glu-238, and Asp-298 together coordinate S-adenosyl-L-methionine. Cys-323 functions as the Nucleophile in the catalytic mechanism. Residue Glu-357 is the Proton acceptor of the active site.

This sequence belongs to the class I-like SAM-binding methyltransferase superfamily. RNA M5U methyltransferase family. TrmA subfamily.

The catalysed reaction is uridine(54) in tRNA + S-adenosyl-L-methionine = 5-methyluridine(54) in tRNA + S-adenosyl-L-homocysteine + H(+). It carries out the reaction uridine(341) in tmRNA + S-adenosyl-L-methionine = 5-methyluridine(341) in tmRNA + S-adenosyl-L-homocysteine + H(+). In terms of biological role, dual-specificity methyltransferase that catalyzes the formation of 5-methyluridine at position 54 (m5U54) in all tRNAs, and that of position 341 (m5U341) in tmRNA (transfer-mRNA). This Saccharophagus degradans (strain 2-40 / ATCC 43961 / DSM 17024) protein is tRNA/tmRNA (uracil-C(5))-methyltransferase.